Consider the following 193-residue polypeptide: Xanthine phosphoribosyltransferase (193 aa).

Xanthine contacts are provided by Leu20 and Thr27. 128 to 132 is a 5-phospho-alpha-D-ribose 1-diphosphate binding site; it reads ANGQA. Position 156 (Lys156) interacts with xanthine.

The protein belongs to the purine/pyrimidine phosphoribosyltransferase family. Xpt subfamily. As to quaternary structure, homodimer.

Its subcellular location is the cytoplasm. It catalyses the reaction XMP + diphosphate = xanthine + 5-phospho-alpha-D-ribose 1-diphosphate. The protein operates within purine metabolism; XMP biosynthesis via salvage pathway; XMP from xanthine: step 1/1. Functionally, converts the preformed base xanthine, a product of nucleic acid breakdown, to xanthosine 5'-monophosphate (XMP), so it can be reused for RNA or DNA synthesis. This chain is Xanthine phosphoribosyltransferase, found in Streptococcus pneumoniae serotype 19F (strain G54).